The primary structure comprises 31 residues: Cyclotide psybry A (31 aa).

The segment at residues glycine 1–asparagine 31 is a cross-link (cyclopeptide (Gly-Asn)). Intrachain disulfides connect cysteine 5/cysteine 20, cysteine 9/cysteine 22, and cysteine 15/cysteine 28.

This is a cyclic peptide.

In terms of biological role, probably participates in a plant defense mechanism. The polypeptide is Cyclotide psybry A (Psychotria brachyceras).